The following is a 469-amino-acid chain: IME2-dependent-signaling protein (469 aa).

M1 carries the post-translational modification N-acetylmethionine. T13 carries the post-translational modification Phosphothreonine. Disordered regions lie at residues K22–M55, A67–Q92, and D117–T143. Phosphoserine occurs at positions 23, 27, and 39. Polar residues-rich tracts occupy residues S25 to G42 and A67 to Q82. Phosphoserine is present on residues S122, S130, S136, S147, and S148.

Seems to act indirectly to modify IME2 activity, thus permitting IME2 to carry out later meiotic functions. The sequence is that of IME2-dependent-signaling protein (IDS2) from Saccharomyces cerevisiae (strain ATCC 204508 / S288c) (Baker's yeast).